The chain runs to 277 residues: Probable endonuclease 4 (277 aa).

Zn(2+) is bound by residues histidine 67, histidine 107, glutamate 141, aspartate 173, histidine 176, histidine 210, aspartate 223, histidine 225, and glutamate 255.

The protein belongs to the AP endonuclease 2 family. Zn(2+) is required as a cofactor.

The catalysed reaction is Endonucleolytic cleavage to 5'-phosphooligonucleotide end-products.. Endonuclease IV plays a role in DNA repair. It cleaves phosphodiester bonds at apurinic or apyrimidinic (AP) sites, generating a 3'-hydroxyl group and a 5'-terminal sugar phosphate. This Haloarcula marismortui (strain ATCC 43049 / DSM 3752 / JCM 8966 / VKM B-1809) (Halobacterium marismortui) protein is Probable endonuclease 4.